The following is a 506-amino-acid chain: uncharacterized protein (506 aa).

This sequence belongs to the Mg-chelatase subunits D/I family. ComM subfamily.

This is an uncharacterized protein from Salmonella typhimurium (strain LT2 / SGSC1412 / ATCC 700720).